Reading from the N-terminus, the 839-residue chain is Taste receptor type 1 member 2 (839 aa).

An N-terminal signal peptide occupies residues 1–19 (MGPRAKTICSLFFLLWVLA). At 20–566 (EPAENSDFYL…VFLEWHEAPT (547 aa)) the chain is on the extracellular side. Residues N84, N248, N292, N312, N368, N407, N428, N487, and N527 are each glycosylated (N-linked (GlcNAc...) asparagine). Residues 567-587 (IAVALLAALGFLSTLAILVIF) form a helical membrane-spanning segment. Over 588–602 (WRHFQTPIVRSAGGP) the chain is Cytoplasmic. A helical membrane pass occupies residues 603 to 623 (MCFLMLTLLLVAYMVVPVYVG). The Extracellular portion of the chain corresponds to 624–635 (PPKVSTCLCRQA). The chain crosses the membrane as a helical span at residues 636–656 (LFPLCFTICISCIAVRSFQIV). Over 657–681 (CAFKMASRFPRAYSYWVRYQGPYVS) the chain is Cytoplasmic. A helical transmembrane segment spans residues 682–702 (MAFITVLKMVIVVIGMLATGL). Residues 703-727 (SPTTRTDPDDPKITIVSCNPNYRNS) are Extracellular-facing. The helical transmembrane segment at 728–748 (LLFNTSLDLLLSVVGFSFAYM) threads the bilayer. The Cytoplasmic segment spans residues 749–760 (GKELPTNYNEAK). A helical transmembrane segment spans residues 761-781 (FITLSMTFYFTSSVSLCTFMS). The Extracellular segment spans residues 782–784 (AYS). A helical transmembrane segment spans residues 785–805 (GVLVTIVDLLVTVLNLLAISL). At 806–839 (GYFGPKCYMILFYPERNTSAYFNSMIQGYTMRRD) the chain is on the cytoplasmic side.

The protein belongs to the G-protein coupled receptor 3 family. TAS1R subfamily. Forms heterodimers with TAS1R3.

It is found in the cell membrane. In terms of biological role, putative taste receptor. TAS1R2/TAS1R3 recognizes diverse natural and synthetic sweeteners. This chain is Taste receptor type 1 member 2 (TAS1R2), found in Pan troglodytes (Chimpanzee).